Consider the following 305-residue polypeptide: tRNA pseudouridine synthase B (305 aa).

The active-site Nucleophile is the aspartate 48.

Belongs to the pseudouridine synthase TruB family. Type 1 subfamily.

It carries out the reaction uridine(55) in tRNA = pseudouridine(55) in tRNA. Functionally, responsible for synthesis of pseudouridine from uracil-55 in the psi GC loop of transfer RNAs. The protein is tRNA pseudouridine synthase B of Pseudomonas fluorescens (strain Pf0-1).